Consider the following 198-residue polypeptide: Peptide deformylase (198 aa).

2 residues coordinate Fe cation: cysteine 123 and histidine 167. The active site involves glutamate 168. Histidine 171 provides a ligand contact to Fe cation.

This sequence belongs to the polypeptide deformylase family. Requires Fe(2+) as cofactor.

It carries out the reaction N-terminal N-formyl-L-methionyl-[peptide] + H2O = N-terminal L-methionyl-[peptide] + formate. Functionally, removes the formyl group from the N-terminal Met of newly synthesized proteins. Requires at least a dipeptide for an efficient rate of reaction. N-terminal L-methionine is a prerequisite for activity but the enzyme has broad specificity at other positions. The chain is Peptide deformylase from Ureaplasma parvum serovar 3 (strain ATCC 27815 / 27 / NCTC 11736).